Here is a 237-residue protein sequence, read N- to C-terminus: Sugar fermentation stimulation protein homolog (237 aa).

This sequence belongs to the SfsA family.

The chain is Sugar fermentation stimulation protein homolog from Pseudomonas fluorescens (strain Pf0-1).